Consider the following 367-residue polypeptide: NADH-quinone oxidoreductase subunit D (367 aa).

This sequence belongs to the complex I 49 kDa subunit family. As to quaternary structure, NDH-1 is composed of 14 different subunits. Subunits NuoB, C, D, E, F, and G constitute the peripheral sector of the complex.

The protein resides in the cell membrane. The enzyme catalyses a quinone + NADH + 5 H(+)(in) = a quinol + NAD(+) + 4 H(+)(out). In terms of biological role, NDH-1 shuttles electrons from NADH, via FMN and iron-sulfur (Fe-S) centers, to quinones in the respiratory chain. The immediate electron acceptor for the enzyme in this species is believed to be ubiquinone. Couples the redox reaction to proton translocation (for every two electrons transferred, four hydrogen ions are translocated across the cytoplasmic membrane), and thus conserves the redox energy in a proton gradient. The chain is NADH-quinone oxidoreductase subunit D from Dehalococcoides mccartyi (strain CBDB1).